The following is a 132-amino-acid chain: Protein C10 (132 aa).

Ala-2 bears the N-acetylalanine mark.

It belongs to the UPF0456 family.

Its subcellular location is the cytoplasm. Its function is as follows. In brain, may be required for corpus callosum development. This Bos taurus (Bovine) protein is Protein C10.